The chain runs to 442 residues: MSEMTPREIVHELDAHIIGQKKAKRSVAVALRNRWRRMQLDADFRQEVTPKNILMIGPTGVGKTEIARRLAKLANAPFIKVEATKFTEVGYVGKEVEQIIRDLTDIAIKLTREQQMGKCRQRAEEHAEERILDALLPKPKNDWDSTDSDANSNTRQIFRKKLREGQLDDKEIDIDVAQPQVGIEIMSPPGMEEMTNQLQSLFKNMGQAPAKRRKMKIKEAFKLLIEEEAAKLVNQEDLKEQAIELVEQHGIVFLDEIDKICKRGETSGPDVSREGVQRDLLPLVEGCTVTTKHGMVKTDHILFIASGAFQMAKPSDLIPELQGRLPIRVELDALSADDFKRILTEPHASLTEQYIALMATEGVTIEFAESGIESIAKAAWQVNERTENIGARRLHTVMEKLMEDISYEASDKSGSSFVIDADYVSAHLDNLVQDEDLSRFIL.

Residues I18 and 60-65 contribute to the ATP site; that span reads GVGKTE. The tract at residues 136–156 is disordered; the sequence is LPKPKNDWDSTDSDANSNTRQ. The ATP site is built by D255, E320, and R392.

This sequence belongs to the ClpX chaperone family. HslU subfamily. A double ring-shaped homohexamer of HslV is capped on each side by a ring-shaped HslU homohexamer. The assembly of the HslU/HslV complex is dependent on binding of ATP.

Its subcellular location is the cytoplasm. In terms of biological role, ATPase subunit of a proteasome-like degradation complex; this subunit has chaperone activity. The binding of ATP and its subsequent hydrolysis by HslU are essential for unfolding of protein substrates subsequently hydrolyzed by HslV. HslU recognizes the N-terminal part of its protein substrates and unfolds these before they are guided to HslV for hydrolysis. In Shewanella sp. (strain MR-7), this protein is ATP-dependent protease ATPase subunit HslU.